The chain runs to 158 residues: MQGPLSAWLVKRRLVHRSLGFDYQGIETLEIKSEDWHSVAVILYVYGYNYLRSQCAYDVAPGGLLASVYHFTRIEYGIDQPEEVCIKVFLARSNPRIPSIFWVWKSADFQERESYDMLGISYDNHPRLKRILMPESWIGWPLRKDYIAPNFYEIQDAH.

It belongs to the complex I 30 kDa subunit family. As to quaternary structure, NDH is composed of at least 16 different subunits, 5 of which are encoded in the nucleus.

It localises to the plastid. The protein resides in the chloroplast thylakoid membrane. It catalyses the reaction a plastoquinone + NADH + (n+1) H(+)(in) = a plastoquinol + NAD(+) + n H(+)(out). The enzyme catalyses a plastoquinone + NADPH + (n+1) H(+)(in) = a plastoquinol + NADP(+) + n H(+)(out). NDH shuttles electrons from NAD(P)H:plastoquinone, via FMN and iron-sulfur (Fe-S) centers, to quinones in the photosynthetic chain and possibly in a chloroplast respiratory chain. The immediate electron acceptor for the enzyme in this species is believed to be plastoquinone. Couples the redox reaction to proton translocation, and thus conserves the redox energy in a proton gradient. This chain is NAD(P)H-quinone oxidoreductase subunit J, chloroplastic, found in Pelargonium hortorum (Common geranium).